The primary structure comprises 3526 residues: WD repeat and FYVE domain-containing protein 3 (3526 aa).

S1942 and S2278 each carry phosphoserine. Residues 2285 to 2981 (LTGSRRNRKE…PHPPKRVRSR (697 aa)) are sufficient for localization to p62 bodies/ALIS. Disordered regions lie at residues 2403–2429 (ETNV…PARY) and 2459–2522 (SSEG…EKTD). Residues 2468–2477 (EPEHGEDTIA) show a composition bias toward basic and acidic residues. Residue S2492 is modified to Phosphoserine. Residues 2531-2656 (EEGEKIQHMY…IRNKVYQRFL (126 aa)) form the BEACH-type PH domain. The interval 2586–3526 (MHEPIIPRGA…RGSEDGPRNC (941 aa)) is interaction with SQSTM1. The BEACH domain occupies 2683–2976 (GLLSTLVGEK…QLFKKPHPPK (294 aa)). Residues 2981 to 3526 (RLNGDNAGIS…RGSEDGPRNC (546 aa)) form an interaction with ATG5 region. 4 WD repeats span residues 3077–3115 (SEWG…EKAK), 3125–3164 (GHTD…FLTQ), 3167–3206 (GHRA…VSVN), and 3210–3254 (GRSQ…VPET). Residues 3272-3335 (AQIGQEAQDE…SGSDDSRRWS (64 aa)) are disordered. The segment covering 3278–3290 (AQDEDSSDSEADE) has biased composition (acidic residues). The interval 3313 to 3363 (AASCRATAAWCTDSGSDDSRRWSDQLSLDEKDGFIFVNYSEGQTRAHLQGP) is interaction with GABARAP. Phosphoserine occurs at positions 3335 and 3339. Residues 3346–3349 (FIFV) carry the LC3-interacting region (LIR) motif. One copy of the WD 5 repeat lies at 3408-3447 (AHPAEVTALGISKDHSRILVGDSRGRVFSWSVSDQPGRSA). Residues 3454–3514 (DEGGDSCSGC…VCQNCYYNLQ (61 aa)) form an FYVE-type zinc finger. C3460, C3463, C3476, C3479, C3484, C3487, C3506, and C3509 together coordinate Zn(2+).

Directly interacts with ATG5 and associates with the ATG12-ATG5-ATG16L complex. Interacts with p62/SQSTM1; this interaction is required to recruit WDFY3 to cytoplasmic bodies and to PML bodies. Directly interacts with GABARAP, GABARAPL1 and GABARAPL2; the interaction with GABARAP is required for WDFY3 recruitment to MAP1LC3B-positive p62/SQSTM1 bodies. Weakly interacts with MAP1LC3C; this interaction is direct. Does not interact with MAP1LC3A, nor MAP1LC3B. Interacts with TRAF6. As to expression, expressed in osteoclast and their mononuclear precursors (at protein level).

The protein resides in the nucleus membrane. The protein localises to the cytoplasm. It localises to the cytosol. Its subcellular location is the nucleus. It is found in the PML body. The protein resides in the membrane. The protein localises to the perikaryon. It localises to the cell projection. Its subcellular location is the axon. Functionally, required for selective macroautophagy (aggrephagy). Acts as an adapter protein by linking specific proteins destined for degradation to the core autophagic machinery members, such as the ATG5-ATG12-ATG16L E3-like ligase, SQSTM1 and LC3. Along with p62/SQSTM1, involved in the formation and autophagic degradation of cytoplasmic ubiquitin-containing inclusions (p62 bodies, ALIS/aggresome-like induced structures). Along with SQSTM1, required to recruit ubiquitinated proteins to PML bodies in the nucleus. Important for normal brain development. Essential for the formation of axonal tracts throughout the brain and spinal cord, including the formation of the major forebrain commissures. Involved in the ability of neural cells to respond to guidance cues. Required for cortical neurons to respond to the trophic effects of netrin-1/NTN1. Regulates Wnt signaling through the removal of DVL3 aggregates, likely in an autophagy-dependent manner. This process may be important for the determination of brain size during embryonic development. May regulate osteoclastogenesis by acting on the TNFSF11/RANKL - TRAF6 pathway. After cytokinetic abscission, involved in midbody remnant degradation. In vitro strongly binds to phosphatidylinositol 3-phosphate (PtdIns3P). The polypeptide is WD repeat and FYVE domain-containing protein 3 (WDFY3) (Homo sapiens (Human)).